A 235-amino-acid polypeptide reads, in one-letter code: 15,16-dihydrobiliverdin:ferredoxin oxidoreductase (235 aa).

It belongs to the HY2 family.

The enzyme catalyses 15,16-dihydrobiliverdin + oxidized 2[4Fe-4S]-[ferredoxin] = biliverdin IXalpha + reduced 2[4Fe-4S]-[ferredoxin] + 2 H(+). In terms of biological role, catalyzes the two-electron reduction of biliverdin IX-alpha at the C15 methine bridge. This Synechococcus sp. (strain CC9605) protein is 15,16-dihydrobiliverdin:ferredoxin oxidoreductase.